The chain runs to 936 residues: Isoleucine--tRNA ligase (936 aa).

Residues 58-68 carry the 'HIGH' region motif; the sequence is PYANGRAHLGT. Glutamate 561 is an L-isoleucyl-5'-AMP binding site. Residues 602-606 carry the 'KMSKS' region motif; sequence KMSKS. Residue lysine 605 participates in ATP binding. Positions 899, 902, 919, and 922 each coordinate Zn(2+).

Belongs to the class-I aminoacyl-tRNA synthetase family. IleS type 1 subfamily. As to quaternary structure, monomer. Zn(2+) serves as cofactor.

Its subcellular location is the cytoplasm. The catalysed reaction is tRNA(Ile) + L-isoleucine + ATP = L-isoleucyl-tRNA(Ile) + AMP + diphosphate. Catalyzes the attachment of isoleucine to tRNA(Ile). As IleRS can inadvertently accommodate and process structurally similar amino acids such as valine, to avoid such errors it has two additional distinct tRNA(Ile)-dependent editing activities. One activity is designated as 'pretransfer' editing and involves the hydrolysis of activated Val-AMP. The other activity is designated 'posttransfer' editing and involves deacylation of mischarged Val-tRNA(Ile). The protein is Isoleucine--tRNA ligase of Coxiella burnetii (strain CbuG_Q212) (Coxiella burnetii (strain Q212)).